The chain runs to 297 residues: Lipoyl synthase (297 aa).

[4Fe-4S] cluster contacts are provided by Cys-37, Cys-42, Cys-48, Cys-63, Cys-67, Cys-70, and Ser-276. The region spanning 49 to 265 (WSRKHATVMI…ERIAKTKGFL (217 aa)) is the Radical SAM core domain.

The protein belongs to the radical SAM superfamily. Lipoyl synthase family. The cofactor is [4Fe-4S] cluster.

Its subcellular location is the cytoplasm. The catalysed reaction is [[Fe-S] cluster scaffold protein carrying a second [4Fe-4S](2+) cluster] + N(6)-octanoyl-L-lysyl-[protein] + 2 oxidized [2Fe-2S]-[ferredoxin] + 2 S-adenosyl-L-methionine + 4 H(+) = [[Fe-S] cluster scaffold protein] + N(6)-[(R)-dihydrolipoyl]-L-lysyl-[protein] + 4 Fe(3+) + 2 hydrogen sulfide + 2 5'-deoxyadenosine + 2 L-methionine + 2 reduced [2Fe-2S]-[ferredoxin]. The protein operates within protein modification; protein lipoylation via endogenous pathway; protein N(6)-(lipoyl)lysine from octanoyl-[acyl-carrier-protein]: step 2/2. Catalyzes the radical-mediated insertion of two sulfur atoms into the C-6 and C-8 positions of the octanoyl moiety bound to the lipoyl domains of lipoate-dependent enzymes, thereby converting the octanoylated domains into lipoylated derivatives. In Rickettsia typhi (strain ATCC VR-144 / Wilmington), this protein is Lipoyl synthase.